A 231-amino-acid chain; its full sequence is Verlamelin biosynthesis protein B (231 aa).

Its pathway is secondary metabolite biosynthesis. Its function is as follows. Part of the gene cluster that mediates the biosynthesis of verlamelin, a lipopeptide that exhibits antifungal activity against plant pathogenic fungi. Verlamelin is a cyclic hexadepsipeptide and is bridged by ester bonding between a 5-hydroxytetradecanoic acid moiety and a carboxyl group on the terminal Val of amide-bonded tetradecanoyl-hexapeptide D-allo-Thr-D-Ala-L-Pro-L-Gln-D-Tyr-L-Val. VlmA and vlmB are altogether regarded as essential components in the biosynthesis of 5-hydroxytetradecanoic acid. VlmA catalyzes the hydroxylation at position C5 of tetradecanoic acid produced in primary metabolism, while the precise function of vlmB still remains to be solved. To be loaded onto the waiting NRPS, 5-hydroxytetradecanoic acid is activated in the form of acyladenylate by the AMP-dependent ligase vlmC. VlmS seems to accept the fatty-acyl intermediate onto the initial module to further elongate amino acid residues by the downstream modules. In addition, in the last module at its C-terminus, vlmS contains a surplus condensation (C) domain that may be involved in cyclization, the last step to form verlamelin. The polypeptide is Verlamelin biosynthesis protein B (Lecanicillium sp).